The chain runs to 477 residues: MKQAIRHIHFVGIGGSGMCGIAEVLHNLGYVVSGSDLADSPTLRRLQSLGVATHVGHAAAHIAGADAVVTSTAVQADNPEVLAARERKIPVVPRALMLTELMRLRKGIAIAGAHGKTTTTSLVASVLGEAGLDPTFVIGGRLNSAGTNAKLGQGEYIVVEADESDGSFLNLLPVMAVVTNIDADHMETYGHDFGRLKQAFVDFLHRMPFYGTAILCIDNPAVRDILPLVTCPVTSYGLSEDAEVRAVDVRAVGTQMHFTVQRRNGVTLPDLQVVLNLAGEHNVLNALAVIAVAAELNVPDDALLRALAGFTGVGRRFQRHGDLPAQGGGHFTLIEDYGHHPVEMAATLAAARGAYPGRRLVLAFQPHRYSRTRDCFEDFVKVLGTADAVLLTEVYAAGEAPIVAADGRSLARALRVAGTVEPVFIDNVADMPQRIAAGARDGDVVLCMGAGSIGGVPAKVVDLLQKNELLAQEGRAQ.

Residue 112–118 coordinates ATP; the sequence is GAHGKTT.

The protein belongs to the MurCDEF family.

Its subcellular location is the cytoplasm. It carries out the reaction UDP-N-acetyl-alpha-D-muramate + L-alanine + ATP = UDP-N-acetyl-alpha-D-muramoyl-L-alanine + ADP + phosphate + H(+). Its pathway is cell wall biogenesis; peptidoglycan biosynthesis. In terms of biological role, cell wall formation. The chain is UDP-N-acetylmuramate--L-alanine ligase from Acidovorax ebreus (strain TPSY) (Diaphorobacter sp. (strain TPSY)).